The sequence spans 512 residues: Replication initiation protein (512 aa).

Essential for replication. Binds specifically to a 60-bp region corresponding to the putative origin of replication of pXO2. Also binds nonspecifically to single-stranded DNA with lower affinity. The protein is Replication initiation protein (repS) of Bacillus anthracis.